We begin with the raw amino-acid sequence, 292 residues long: Ribosome-inactivating protein saporin-2 (292 aa).

A signal peptide spans 1 to 24 (MKIYVVATIAWILLQFSAWTTTDA). Glu-200 is a catalytic residue.

This sequence belongs to the ribosome-inactivating protein family. Type 1 RIP subfamily.

The enzyme catalyses Endohydrolysis of the N-glycosidic bond at one specific adenosine on the 28S rRNA.. In terms of biological role, ribosome-inactivating protein of type 1, inhibits protein synthesis in animal cells. Useful as immunotoxin for pharmacological applications. This chain is Ribosome-inactivating protein saporin-2 (SAP2), found in Saponaria officinalis (Common soapwort).